Here is a 214-residue protein sequence, read N- to C-terminus: Probable nicotinate-nucleotide adenylyltransferase (214 aa).

This sequence belongs to the NadD family.

It catalyses the reaction nicotinate beta-D-ribonucleotide + ATP + H(+) = deamido-NAD(+) + diphosphate. Its pathway is cofactor biosynthesis; NAD(+) biosynthesis; deamido-NAD(+) from nicotinate D-ribonucleotide: step 1/1. Its function is as follows. Catalyzes the reversible adenylation of nicotinate mononucleotide (NaMN) to nicotinic acid adenine dinucleotide (NaAD). The polypeptide is Probable nicotinate-nucleotide adenylyltransferase (Mycobacterium tuberculosis (strain ATCC 25177 / H37Ra)).